Reading from the N-terminus, the 258-residue chain is Large ribosomal subunit protein uL2x (258 aa).

The segment at 211–231 is disordered; that stretch reads HGGGNHQHIGHASTVRRDAPP.

Belongs to the universal ribosomal protein uL2 family.

This chain is Large ribosomal subunit protein uL2x (RPL8C), found in Arabidopsis thaliana (Mouse-ear cress).